We begin with the raw amino-acid sequence, 4328 residues long: Cadherin-4 (4328 aa).

An N-terminal signal peptide occupies residues 1 to 23 (MKKHRVFHLFLLIFCKAISLVTT). Residues 24-4072 (SSSTEQIFEF…TVLEFLLKAE (4049 aa)) lie on the Extracellular side of the membrane. 2 N-linked (GlcNAc...) asparagine glycosylation sites follow: Asn-39 and Asn-56. Cadherin domains are found at residues 108 to 153 (PLNR…SPVF) and 156 to 275 (GEQG…NPNI). Residues Asn-196, Asn-330, Asn-339, Asn-365, Asn-431, Asn-452, and Asn-584 are each glycosylated (N-linked (GlcNAc...) asparagine). 11 Cadherin domains span residues 384-492 (DNEK…APVF), 507-608 (PGDV…SPVF), 609-720 (SSFP…SPQF), 721-826 (DEVS…PPKC), 827-934 (VVQH…AIEF), 935-1051 (DDVA…KPMY), 1047-1156 (KKPM…SPTF), 1175-1262 (RIFA…PPEI), 1265-1363 (KKSD…RPKF), 1364-1467 (SASH…SPYF), and 1476-1570 (VDES…APET). Asn-811 and Asn-899 each carry an N-linked (GlcNAc...) asparagine glycan. The Cell attachment site signature appears at 1090–1092 (RGD). Asn-1192 carries an N-linked (GlcNAc...) asparagine glycan. A disordered region spans residues 1246–1267 (NSAGQKPRKSKNSPPEISGKKS). Asn-1335 is a glycosylation site (N-linked (GlcNAc...) asparagine). An N-linked (GlcNAc...) asparagine glycan is attached at Asn-1610. The 114-residue stretch at 1671-1784 (RRQVYRGTIR…IDENDEPPRF (114 aa)) folds into the Cadherin 14 domain. Asn-1895 carries an N-linked (GlcNAc...) asparagine glycan. The 68-residue stretch at 1917 to 1984 (FSIVNPHEAF…ENINDETPIF (68 aa)) folds into the Cadherin 15 domain. N-linked (GlcNAc...) asparagine glycans are attached at residues Asn-2059, Asn-2150, Asn-2216, Asn-2367, Asn-2413, Asn-2440, and Asn-2535. Cadherin domains are found at residues 2187–2285 (EKLK…MPEF) and 2286–2397 (IRSD…PPRF). 9 consecutive Cadherin domains span residues 2429–2505 (LQFS…PPFF), 2506–2608 (VLPF…VPRF), 2609–2712 (SNSH…APAF), 2719–2813 (FTIS…PPQF), 2828–2915 (SPIL…CPEA), 2913–3011 (PEAN…RPKI), 3012–3113 (IEKL…APTF), 3114–3216 (EKST…APKF), and 3217–3326 (EKEK…APTF). N-linked (GlcNAc...) asparagine glycosylation is found at Asn-2844, Asn-2916, Asn-2941, Asn-3083, and Asn-3143. An N-linked (GlcNAc...) asparagine glycan is attached at Asn-3330. Cadherin domains are found at residues 3335 to 3428 (VQEG…APTM) and 3429 to 3554 (KPMK…VDEF). N-linked (GlcNAc...) asparagine glycosylation is present at Asn-3512. Residues 3706–3744 (ETNQCAKSPCEQWQLCIPSVHNSTYECVCPLGMEGDKCS) enclose the EGF-like 1 domain. Intrachain disulfides connect Cys-3710/Cys-3721, Cys-3715/Cys-3732, Cys-3734/Cys-3743, Cys-3898/Cys-3925, Cys-3933/Cys-3944, Cys-3938/Cys-3954, Cys-3956/Cys-3965, Cys-3972/Cys-3983, Cys-3977/Cys-3992, and Cys-3994/Cys-4003. N-linked (GlcNAc...) asparagine glycosylation is present at Asn-3727. In terms of domain architecture, Laminin G-like spans 3757–3925 (EAELSVGGDG…MKLFGAQPGC (169 aa)). EGF-like domains are found at residues 3929-3966 (TSSP…NVCE) and 3968-4004 (DLEP…KHCE). Asn-4043 carries an N-linked (GlcNAc...) asparagine glycan. The chain crosses the membrane as a helical span at residues 4073–4093 (IVIVILGVLLLLLVFCLTFIT). At 4094–4328 (WKCCKKNRDP…IDEEVNIHIS (235 aa)) the chain is on the cytoplasmic side. Disordered stretches follow at residues 4143-4215 (TSSV…SSLR) and 4268-4311 (NFER…PISL). Residues 4178-4196 (TRRDPLPSDKFRRVDETAN) show a composition bias toward basic and acidic residues. Residues 4207–4209 (RGD) carry the Cell attachment site motif.

In larvae and adult, it is expressed in various tissues including pharyngeal muscle, hypodermis and gonad. In the nervous system it is expressed in sensory neurons and motor neurons in the ventral cord.

The protein resides in the cell membrane. In terms of biological role, potential calcium-dependent cell-adhesion protein that controls axon guidance in the ventral cord. The protein is Cadherin-4 of Caenorhabditis elegans.